Here is a 298-residue protein sequence, read N- to C-terminus: Glyoxalase domain-containing protein 4 (298 aa).

Residues 5–130 (RALHFVFKVG…GGYKFYLQDR (126 aa)) form the VOC 1 domain. K109 bears the N6-succinyllysine mark. S131 carries the post-translational modification Phosphoserine. The 122-residue stretch at 137–258 (PVLKVTLAVS…DGHEICFVGD (122 aa)) folds into the VOC 2 domain. K273 is modified (N6-succinyllysine).

Belongs to the glyoxalase I family. Interacts with NUDT9.

It is found in the mitochondrion. The protein is Glyoxalase domain-containing protein 4 (Glod4) of Rattus norvegicus (Rat).